A 111-amino-acid chain; its full sequence is Class I hydrophobin 2 (111 aa).

Positions 1-21 are cleaved as a signal peptide; that stretch reads MFSRVMFCTFLILPLLAAATA. 4 disulfide bridges follow: C30-C90, C37-C84, C38-C71, and C91-C104.

This sequence belongs to the fungal hydrophobin family. In terms of assembly, self-assembles to form functional amyloid fibrils called rodlets. Self-assembly into fibrillar rodlets occurs spontaneously at hydrophobic:hydrophilic interfaces and the rodlets further associate laterally to form amphipathic monolayers. Behavior depends on environmental conditions: (1) when the pH increases or in the presence of Ca(2+) ions, an assembled state, beta-sheet rich, is formed; (2) when the solvent polarity increases, the vhm2 shows an increased tendency to reach hydrophobic/hydrophilic interfaces, with no detectable conformational change; and (3) at high temperature, a reversible conformational change and reversible aggregation occur. The physical and chemical properties, both in solution and as a biofilm, are affected by polysaccharides that act as hydrophilic stabilizer.

It is found in the secreted. The protein resides in the cell wall. In terms of biological role, aerial growth, conidiation, and dispersal of filamentous fungi in the environment rely upon a capability of their secreting small amphipathic proteins called hydrophobins (HPBs) with low sequence identity. Class I can self-assemble into an outermost layer of rodlet bundles on aerial cell surfaces, conferring cellular hydrophobicity that supports fungal growth, development and dispersal; whereas Class II form highly ordered films at water-air interfaces through intermolecular interactions but contribute nothing to the rodlet structure. Vmh2 is a class I hydrophobin involved in biofilm formation and is essential for the maintenance of the surface hydrophobicity of the mycelium. Seems not to be involved in hyphal resistance against environmental stress. The protein is Class I hydrophobin 2 of Pleurotus ostreatus (strain PC15) (Oyster mushroom).